Here is a 176-residue protein sequence, read N- to C-terminus: uncharacterized protein (176 aa).

This is an uncharacterized protein from Bacillus anthracis.